The following is a 396-amino-acid chain: uncharacterized protein (396 aa).

Transmembrane regions (helical) follow at residues 12 to 32 (LLALAVSAFAIGTTEFISVGL), 48 to 68 (GLTVSLYALGVTFGAPILTSL), 78 to 98 (LLWIMFIFIAGNTMAATASSI), 106 to 126 (VISAFSHGVFMSIGSTIAADI), 138 to 158 (IMFTGLTVATVTGVPFGTFIG), 165 to 185 (FAFMVIIAVGIIAFITNGILV), 209 to 229 (LLLLFVITALGYGGTFVVFTY), 242 to 262 (AGTVAVILLGYGIAIAIGNMI), 271 to 291 (PIAALFYMFIVQAIVLFVLTF), 297 to 317 (AAGLITILCMGLLAFMNVPGL), 338 to 358 (AMNIAAFNAGIALGSYLGGVI), and 362 to 382 (IGLIHTAWIGGLMVVGAVILT).

It belongs to the major facilitator superfamily.

Its subcellular location is the cell membrane. This is an uncharacterized protein from Bacillus subtilis (strain 168).